A 294-amino-acid polypeptide reads, in one-letter code: Ribosomal protein L11 methyltransferase (294 aa).

S-adenosyl-L-methionine-binding residues include threonine 144, glycine 165, aspartate 187, and asparagine 229.

The protein belongs to the methyltransferase superfamily. PrmA family.

The protein localises to the cytoplasm. The catalysed reaction is L-lysyl-[protein] + 3 S-adenosyl-L-methionine = N(6),N(6),N(6)-trimethyl-L-lysyl-[protein] + 3 S-adenosyl-L-homocysteine + 3 H(+). Its function is as follows. Methylates ribosomal protein L11. The chain is Ribosomal protein L11 methyltransferase from Cellvibrio japonicus (strain Ueda107) (Pseudomonas fluorescens subsp. cellulosa).